The following is a 259-amino-acid chain: 5'-nucleotidase SurE (259 aa).

Aspartate 8, aspartate 9, serine 41, and asparagine 93 together coordinate a divalent metal cation.

Belongs to the SurE nucleotidase family. A divalent metal cation is required as a cofactor.

The protein resides in the cytoplasm. The enzyme catalyses a ribonucleoside 5'-phosphate + H2O = a ribonucleoside + phosphate. Functionally, nucleotidase that shows phosphatase activity on nucleoside 5'-monophosphates. The polypeptide is 5'-nucleotidase SurE (Verminephrobacter eiseniae (strain EF01-2)).